Here is a 622-residue protein sequence, read N- to C-terminus: 1-deoxy-D-xylulose-5-phosphate synthase (622 aa).

Thiamine diphosphate contacts are provided by residues H80 and 121–123 (GHS). Residue D152 coordinates Mg(2+). Residues 153–154 (GA), N181, Y288, and E370 contribute to the thiamine diphosphate site. Residue N181 coordinates Mg(2+).

It belongs to the transketolase family. DXPS subfamily. Homodimer. The cofactor is Mg(2+). It depends on thiamine diphosphate as a cofactor.

It carries out the reaction D-glyceraldehyde 3-phosphate + pyruvate + H(+) = 1-deoxy-D-xylulose 5-phosphate + CO2. It functions in the pathway metabolic intermediate biosynthesis; 1-deoxy-D-xylulose 5-phosphate biosynthesis; 1-deoxy-D-xylulose 5-phosphate from D-glyceraldehyde 3-phosphate and pyruvate: step 1/1. Functionally, catalyzes the acyloin condensation reaction between C atoms 2 and 3 of pyruvate and glyceraldehyde 3-phosphate to yield 1-deoxy-D-xylulose-5-phosphate (DXP). The chain is 1-deoxy-D-xylulose-5-phosphate synthase from Shewanella oneidensis (strain ATCC 700550 / JCM 31522 / CIP 106686 / LMG 19005 / NCIMB 14063 / MR-1).